The chain runs to 406 residues: 2,3-bisphosphoglycerate-independent phosphoglycerate mutase (406 aa).

It belongs to the BPG-independent phosphoglycerate mutase family. A-PGAM subfamily.

It catalyses the reaction (2R)-2-phosphoglycerate = (2R)-3-phosphoglycerate. It participates in carbohydrate degradation; glycolysis; pyruvate from D-glyceraldehyde 3-phosphate: step 3/5. Functionally, catalyzes the interconversion of 2-phosphoglycerate and 3-phosphoglycerate. This Methanococcus maripaludis (strain DSM 14266 / JCM 13030 / NBRC 101832 / S2 / LL) protein is 2,3-bisphosphoglycerate-independent phosphoglycerate mutase.